Consider the following 518-residue polypeptide: Putative N-acetylmuramoyl-L-alanine amidase YrvJ (518 aa).

Residues 1–27 (MNKKYFVLIVCIIFTSALFPTFSSVTA) form the signal peptide. 4 consecutive SH3b domains span residues 29–91 (QGEA…ITKE), 102–164 (SDTV…TSGG), 181–243 (STTG…LTSS), and 258–320 (AKKA…VQTS). Disordered stretches follow at residues 94–121 (ASTSSSGSSDTVTSTDPDLRMRSGPGTS) and 160–186 (VTSGGSSSASDESDQTEDSGASTTGTV). 2 stretches are compositionally biased toward low complexity: residues 95-108 (STSSSGSSDTVTST) and 160-169 (VTSGGSSSAS). Residues 322–352 (SAEEAGEPPVSDSPSGNGSLNNKTIIVDPGH) form a disordered region. Over residues 333 to 345 (DSPSGNGSLNNKT) the composition is skewed to polar residues. The 169-residue stretch at 346–514 (IIVDPGHGGK…VTDGIESGLE (169 aa)) folds into the MurNAc-LAA domain.

The protein belongs to the N-acetylmuramoyl-L-alanine amidase 3 family.

Its subcellular location is the secreted. It localises to the cell wall. It carries out the reaction Hydrolyzes the link between N-acetylmuramoyl residues and L-amino acid residues in certain cell-wall glycopeptides.. Its function is as follows. Probably involved in cell-wall metabolism. The chain is Putative N-acetylmuramoyl-L-alanine amidase YrvJ (yrvJ) from Bacillus subtilis (strain 168).